The following is a 238-amino-acid chain: Cysteine-rich venom protein 2 (238 aa).

Positions 1–19 (MIAFIVLLSLAAVLQQSSG) are cleaved as a signal peptide. The SCP domain occupies 38–164 (VDKHNALRRS…STKYLYVCQY (127 aa)). 8 cysteine pairs are disulfide-bonded: Cys75–Cys153, Cys92–Cys165, Cys148–Cys162, Cys184–Cys191, Cys187–Cys196, Cys200–Cys233, Cys209–Cys227, and Cys218–Cys231. The region spanning 200 to 233 (CEYEDAYTNCNDLVKERKCQTEWIKSQCPATCFC) is the ShKT domain.

It belongs to the CRISP family. As to expression, expressed by the venom gland.

It is found in the secreted. Functionally, blocks contraction of smooth muscle elicited by high potassium-induced depolarization, but does not block caffeine-stimulated contraction. May target voltage-gated calcium channels (Cav) on smooth muscle. The polypeptide is Cysteine-rich venom protein 2 (Hydrophis hardwickii (Hardwick's spine-bellied seasnake)).